The following is a 141-amino-acid chain: Large ribosomal subunit protein uL11 (141 aa).

The protein belongs to the universal ribosomal protein uL11 family. In terms of assembly, part of the ribosomal stalk of the 50S ribosomal subunit. Interacts with L10 and the large rRNA to form the base of the stalk. L10 forms an elongated spine to which L12 dimers bind in a sequential fashion forming a multimeric L10(L12)X complex. Post-translationally, one or more lysine residues are methylated.

Functionally, forms part of the ribosomal stalk which helps the ribosome interact with GTP-bound translation factors. The chain is Large ribosomal subunit protein uL11 from Gloeobacter violaceus (strain ATCC 29082 / PCC 7421).